The primary structure comprises 354 residues: UDP-galactose transporter homolog 1 (354 aa).

The next 5 helical transmembrane spans lie at 6-26 (GGSI…FLTW), 54-74 (LVIN…YSVV), 95-112 (FFKS…SSPL), 123-143 (LAYL…HFVL), and 148-168 (FPLY…IFTL). The N-linked (GlcNAc...) asparagine glycan is linked to N202. 4 helical membrane-spanning segments follow: residues 227–247 (YLMC…ALIF), 268–288 (MNIL…FIIL), 295–317 (ILIT…LFGH), and 321–340 (GLQW…EALV).

Belongs to the nucleotide-sugar transporter family. SLC35B subfamily.

The protein localises to the endoplasmic reticulum membrane. In terms of biological role, may be involved in specific transport of UDP-Gal from the cytosol to the Golgi lumen. Involved in the maintenance of optimal conditions for the folding of secretory pathway proteins in the endoplasmic reticulum. This chain is UDP-galactose transporter homolog 1 (HUT1), found in Debaryomyces hansenii (strain ATCC 36239 / CBS 767 / BCRC 21394 / JCM 1990 / NBRC 0083 / IGC 2968) (Yeast).